A 669-amino-acid chain; its full sequence is UvrABC system protein B (669 aa).

Residues 26-414 form the Helicase ATP-binding domain; sequence TNFHAGIAKQ…AGEVIELLVR (389 aa). Residue 39-46 participates in ATP binding; that stretch reads GVTGSGKT. A Beta-hairpin motif is present at residues 92–115; it reads YYDYYQPEAYVPASDTFIEKDSSI. The region spanning 435–597 is the Helicase C-terminal domain; it reads LISQINVCIK…SVVRPISDIL (163 aa). The UVR domain occupies 631–666; that stretch reads AAQMKVLEQQMYQHARDLEFEDAARIRDQIQRLREA.

The protein belongs to the UvrB family. In terms of assembly, forms a heterotetramer with UvrA during the search for lesions. Interacts with UvrC in an incision complex.

It is found in the cytoplasm. In terms of biological role, the UvrABC repair system catalyzes the recognition and processing of DNA lesions. A damage recognition complex composed of 2 UvrA and 2 UvrB subunits scans DNA for abnormalities. Upon binding of the UvrA(2)B(2) complex to a putative damaged site, the DNA wraps around one UvrB monomer. DNA wrap is dependent on ATP binding by UvrB and probably causes local melting of the DNA helix, facilitating insertion of UvrB beta-hairpin between the DNA strands. Then UvrB probes one DNA strand for the presence of a lesion. If a lesion is found the UvrA subunits dissociate and the UvrB-DNA preincision complex is formed. This complex is subsequently bound by UvrC and the second UvrB is released. If no lesion is found, the DNA wraps around the other UvrB subunit that will check the other stand for damage. The polypeptide is UvrABC system protein B (Xylella fastidiosa (strain 9a5c)).